The sequence spans 507 residues: Type II methyltransferase M.PstI (507 aa).

This sequence belongs to the N(4)/N(6)-methyltransferase family. In terms of assembly, monomer.

The catalysed reaction is a 2'-deoxyadenosine in DNA + S-adenosyl-L-methionine = an N(6)-methyl-2'-deoxyadenosine in DNA + S-adenosyl-L-homocysteine + H(+). A gamma subtype methylase that recognizes the double-stranded sequence 5'-CTGCAG-3', methylates A-5 on both strands, and protects the DNA from cleavage by the PstI endonuclease. This chain is Type II methyltransferase M.PstI (pstIM), found in Providencia stuartii.